We begin with the raw amino-acid sequence, 285 residues long: HTH-type transcriptional activator AmpR (285 aa).

The HTH lysR-type domain occupies 5-62; sequence LPLNALRAFEASARHLSFTRAALELCVTQAAVSQQVRILEDRLNRVLFKRLPRGLEMT. The H-T-H motif DNA-binding region spans 22–41; the sequence is FTRAALELCVTQAAVSQQVR.

The protein belongs to the LysR transcriptional regulatory family.

It is found in the cytoplasm. This protein is a positive regulator of gene expression of beta-lactamase (AmpC). The sequence is that of HTH-type transcriptional activator AmpR (ampR) from Citrobacter koseri (Citrobacter diversus).